The chain runs to 461 residues: Argininosuccinate lyase (461 aa).

The protein belongs to the lyase 1 family. Argininosuccinate lyase subfamily.

It is found in the cytoplasm. The catalysed reaction is 2-(N(omega)-L-arginino)succinate = fumarate + L-arginine. The protein operates within amino-acid biosynthesis; L-arginine biosynthesis; L-arginine from L-ornithine and carbamoyl phosphate: step 3/3. Its activity is regulated as follows. Strongly inhibited by L-arginine. Inhibitory effects are lowered at pH 7.0 compared to those at pH 8.0. At 42 degrees Celsius and pH 8.0, activity decreases to 77% and 25% in the presence of 1 mM and 10 mM arginine, respectively. The other amino and organic acids do not affect activity. Functionally, catalyzes the last step of arginine biosynthesis, the conversion of argininosuccinate into L-arginine and fumarate. The polypeptide is Argininosuccinate lyase (Nostoc sp. (strain PCC 7120 / SAG 25.82 / UTEX 2576)).